Consider the following 268-residue polypeptide: UPF0719 transmembrane protein aq_1349 (268 aa).

A run of 8 helical transmembrane segments spans residues 5 to 24 (LIAL…LFFR), 37 to 59 (NLAL…YSVY), 69 to 91 (LYLI…IFLR), 104 to 126 (AGAG…ASFW), 130 to 152 (SFIL…LFIS), 173 to 195 (FSAS…GAIS), 210 to 232 (VLYF…FLLF), and 245 to 267 (NLSA…LAVM).

It belongs to the UPF0719 family.

The protein resides in the cell membrane. The sequence is that of UPF0719 transmembrane protein aq_1349 from Aquifex aeolicus (strain VF5).